The sequence spans 282 residues: Sulfur carrier protein FdhD (282 aa).

C126 (cysteine persulfide intermediate) is an active-site residue. 265-270 (FVRNNR) contributes to the Mo-bis(molybdopterin guanine dinucleotide) binding site.

Belongs to the FdhD family.

Its subcellular location is the cytoplasm. Functionally, required for formate dehydrogenase (FDH) activity. Acts as a sulfur carrier protein that transfers sulfur from IscS to the molybdenum cofactor prior to its insertion into FDH. The polypeptide is Sulfur carrier protein FdhD (Thermoplasma acidophilum (strain ATCC 25905 / DSM 1728 / JCM 9062 / NBRC 15155 / AMRC-C165)).